Consider the following 159-residue polypeptide: Nucleotide-binding protein PSPA7_4966 (159 aa).

The protein belongs to the YajQ family.

Functionally, nucleotide-binding protein. The protein is Nucleotide-binding protein PSPA7_4966 of Pseudomonas paraeruginosa (strain DSM 24068 / PA7) (Pseudomonas aeruginosa (strain PA7)).